We begin with the raw amino-acid sequence, 278 residues long: Formyltetrahydrofolate deformylase (278 aa).

The ACT domain maps to 6 to 85 (ILLTDCPDDK…RLIGTQRKRI (80 aa)). Asp-223 is a catalytic residue.

Belongs to the PurU family.

It carries out the reaction (6R)-10-formyltetrahydrofolate + H2O = (6S)-5,6,7,8-tetrahydrofolate + formate + H(+). The protein operates within purine metabolism; IMP biosynthesis via de novo pathway; formate from 10-formyl-5,6,7,8-tetrahydrofolate: step 1/1. Its function is as follows. Catalyzes the hydrolysis of 10-formyltetrahydrofolate (formyl-FH4) to formate and tetrahydrofolate (FH4). This is Formyltetrahydrofolate deformylase from Haemophilus influenzae (strain ATCC 51907 / DSM 11121 / KW20 / Rd).